The primary structure comprises 760 residues: 5-methyltetrahydropteroyltriglutamate--homocysteine methyltransferase (760 aa).

Residues 17-20 (RELK) and Lys-118 contribute to the 5-methyltetrahydropteroyltri-L-glutamate site. Residues 434–436 (IGS) and Glu-487 contribute to the L-homocysteine site. L-methionine contacts are provided by residues 434–436 (IGS) and Glu-487. 5-methyltetrahydropteroyltri-L-glutamate-binding positions include 518 to 519 (RC) and Trp-564. Asp-602 is a binding site for L-homocysteine. Residue Asp-602 coordinates L-methionine. 5-methyltetrahydropteroyltri-L-glutamate is bound at residue Glu-608. Positions 644, 646, and 668 each coordinate Zn(2+). Residue His-697 is the Proton donor of the active site. Residue Cys-729 coordinates Zn(2+).

The protein belongs to the vitamin-B12 independent methionine synthase family. It depends on Zn(2+) as a cofactor.

The catalysed reaction is 5-methyltetrahydropteroyltri-L-glutamate + L-homocysteine = tetrahydropteroyltri-L-glutamate + L-methionine. Its pathway is amino-acid biosynthesis; L-methionine biosynthesis via de novo pathway; L-methionine from L-homocysteine (MetE route): step 1/1. Catalyzes the transfer of a methyl group from 5-methyltetrahydrofolate to homocysteine resulting in methionine formation. This is 5-methyltetrahydropteroyltriglutamate--homocysteine methyltransferase from Buchnera aphidicola subsp. Cinara cedri (strain Cc).